The primary structure comprises 544 residues: CTP synthase (544 aa).

The segment at 1–265 (MTRYIFITGG…DTQVLAYFGL (265 aa)) is amidoligase domain. CTP is bound at residue Ser-13. Ser-13 is a UTP binding site. 14 to 19 (SLGKGL) serves as a coordination point for ATP. Tyr-54 serves as a coordination point for L-glutamine. Residue Asp-71 participates in ATP binding. Mg(2+) is bound by residues Asp-71 and Glu-139. Residues 146–148 (DIE), 186–191 (KTKPTQ), and Lys-222 each bind CTP. Residues 186–191 (KTKPTQ) and Lys-222 each bind UTP. Val-240 serves as a coordination point for ATP. One can recognise a Glutamine amidotransferase type-1 domain in the interval 291 to 543 (TIAVVGKYTS…IKAAIEQSRL (253 aa)). L-glutamine is bound at residue Gly-353. Cys-380 functions as the Nucleophile; for glutamine hydrolysis in the catalytic mechanism. L-glutamine contacts are provided by residues 381 to 384 (FGMQ), Glu-404, and Arg-472. Residues His-516 and Glu-518 contribute to the active site.

This sequence belongs to the CTP synthase family. As to quaternary structure, homotetramer.

The catalysed reaction is UTP + L-glutamine + ATP + H2O = CTP + L-glutamate + ADP + phosphate + 2 H(+). It carries out the reaction L-glutamine + H2O = L-glutamate + NH4(+). The enzyme catalyses UTP + NH4(+) + ATP = CTP + ADP + phosphate + 2 H(+). It participates in pyrimidine metabolism; CTP biosynthesis via de novo pathway; CTP from UDP: step 2/2. Its activity is regulated as follows. Allosterically activated by GTP, when glutamine is the substrate; GTP has no effect on the reaction when ammonia is the substrate. The allosteric effector GTP functions by stabilizing the protein conformation that binds the tetrahedral intermediate(s) formed during glutamine hydrolysis. Inhibited by the product CTP, via allosteric rather than competitive inhibition. Its function is as follows. Catalyzes the ATP-dependent amination of UTP to CTP with either L-glutamine or ammonia as the source of nitrogen. Regulates intracellular CTP levels through interactions with the four ribonucleotide triphosphates. The protein is CTP synthase of Azospirillum brasilense.